The following is a 42-amino-acid chain: Photosystem I reaction center subunit IX (42 aa).

A helical membrane pass occupies residues 7–27 (YLSVAPVLSTLWFVSLAGLLI).

The protein belongs to the PsaJ family.

The protein resides in the plastid. Its subcellular location is the chloroplast thylakoid membrane. May help in the organization of the PsaE and PsaF subunits. This is Photosystem I reaction center subunit IX from Capsella bursa-pastoris (Shepherd's purse).